We begin with the raw amino-acid sequence, 280 residues long: Putative sugar uptake protein (280 aa).

Helical transmembrane passes span 4 to 21 (LIALIPALGWGIFSLIAG), 33 to 52 (MGLGTGALIIGIITAIIHPA), 56 to 78 (ITIFSLSLISGMFCALGQSGQFI), 91 to 113 (LSTGFQLIGNTLIGAIIFGEWTS), 117 to 136 (YLIGTLALILIIVGVSLTAI), 149 to 166 (IILLLFTSIGYWIYSSFP), 176 to 195 (LFLPQMIGIFIGSIIFLLVS), 207 to 229 (WLNIFSGFSYGIAAFSYIFSAQL), 233 to 255 (ITAFIYSQLCVIISTLGGIFFIG), and 262 to 279 (ELIATFVGLILIIIGAAI).

Belongs to the GRP transporter (TC 2.A.7.5) family.

Its subcellular location is the cell membrane. The sequence is that of Putative sugar uptake protein from Lactobacillus helveticus (Lactobacillus suntoryeus).